Reading from the N-terminus, the 353-residue chain is DNA-directed RNA polymerase subunit alpha (353 aa).

Residues 1–226 (MLISQRPTLT…ELFGLARELN (226 aa)) form an alpha N-terminal domain (alpha-NTD) region. Residues 241-353 (ADHIASFGLP…TEDYAETEQL (113 aa)) form an alpha C-terminal domain (alpha-CTD) region. The interval 326–353 (ATGTWSDTDAGSFGDAEGTEDYAETEQL) is disordered. A compositionally biased stretch (acidic residues) spans 342 to 353 (EGTEDYAETEQL).

It belongs to the RNA polymerase alpha chain family. In terms of assembly, homodimer. The RNAP catalytic core consists of 2 alpha, 1 beta, 1 beta' and 1 omega subunit. When a sigma factor is associated with the core the holoenzyme is formed, which can initiate transcription.

The enzyme catalyses RNA(n) + a ribonucleoside 5'-triphosphate = RNA(n+1) + diphosphate. DNA-dependent RNA polymerase catalyzes the transcription of DNA into RNA using the four ribonucleoside triphosphates as substrates. The polypeptide is DNA-directed RNA polymerase subunit alpha (Rhodococcus jostii (strain RHA1)).